The primary structure comprises 388 residues: GTPase Obg (388 aa).

Residues 1-159 (MKFIDEASIR…RSLRLELLLL (159 aa)) enclose the Obg domain. In terms of domain architecture, OBG-type G spans 160-333 (ADVGLLGMPN…LSLKLLDYIA (174 aa)). Residues 166 to 173 (GMPNAGKS), 191 to 195 (FTTLV), 213 to 216 (DIPG), 283 to 286 (NKTD), and 314 to 316 (SAF) each bind GTP. Mg(2+)-binding residues include serine 173 and threonine 193.

This sequence belongs to the TRAFAC class OBG-HflX-like GTPase superfamily. OBG GTPase family. Monomer. The cofactor is Mg(2+).

It localises to the cytoplasm. Its function is as follows. An essential GTPase which binds GTP, GDP and possibly (p)ppGpp with moderate affinity, with high nucleotide exchange rates and a fairly low GTP hydrolysis rate. Plays a role in control of the cell cycle, stress response, ribosome biogenesis and in those bacteria that undergo differentiation, in morphogenesis control. The polypeptide is GTPase Obg (Shewanella denitrificans (strain OS217 / ATCC BAA-1090 / DSM 15013)).